The primary structure comprises 302 residues: Gap junction delta-2 protein (302 aa).

Residues 1 to 19 (MGEWTILERLLEAAVQQHS) are Cytoplasmic-facing. A helical transmembrane segment spans residues 20–42 (TMIGRILLTVVVIFRILVVAIVG). Residues 43 to 75 (ETVYDDEQTMFVCNTLQPGCNQACYDKAFPISH) lie on the Extracellular side of the membrane. The helical transmembrane segment at 76-98 (IRYWVFQIIMVCTPSLCFITYSV) threads the bilayer. The Cytoplasmic segment spans residues 99–177 (HQSSKQRERQ…KIRRQEGISR (79 aa)). A helical transmembrane segment spans residues 178–200 (FYIIQVVFRNALEIGFLMGQYFL). Topologically, residues 201-232 (YGFKVPSMYECNRYPCVKMVECYVSRPTEKTV) are extracellular. The helical transmembrane segment at 233 to 255 (FLVFMFAVSGLCVILNLAELNHL) threads the bilayer. Residues 256–302 (GWRKIKTAVRGAQERRKSIYEIRNKDSPHRIGVPNFGRTQSSDSAYV) lie on the Cytoplasmic side of the membrane.

The protein belongs to the connexin family. Delta-type subfamily. As to quaternary structure, a connexon is composed of a hexamer of connexins. Retinal specific.

The protein localises to the cell membrane. It localises to the cell junction. It is found in the gap junction. In terms of biological role, one gap junction consists of a cluster of closely packed pairs of transmembrane channels, the connexons, through which materials of low MW diffuse from one cell to a neighboring cell. This Leucoraja erinaceus (Little skate) protein is Gap junction delta-2 protein.